Reading from the N-terminus, the 326-residue chain is Lipid droplet-associated hydrolase (326 aa).

The active-site Nucleophile is the S140. Residues D272 and H301 each act as charge relay system in the active site.

The protein belongs to the AB hydrolase superfamily. LDAH family. In terms of tissue distribution, expressed in liver, adrenal gland, prostate, spleen, kidney, brown and white adipose tissue, testis and to a lesser extent in brain (at protein level). Expressed in peritoneal macrophages and bone marrow-derived macrophages (at protein level). Highly expressed in macrophage and foam cell-rich areas in atherosclerotic lesions (at protein level). mRNA, but no protein, expressed in heart and muscle.

It localises to the lipid droplet. Its subcellular location is the endoplasmic reticulum. The enzyme catalyses a cholesterol ester + H2O = cholesterol + a fatty acid + H(+). In terms of biological role, probable serine lipid hydrolase associated with lipid droplets. Has low cholesterol esterase activity. Appears to lack triglyceride lipase activity. Involved in cholesterol and triglyceride homeostasis; stimulates cellular triglyceride accumulation and cellular cholesterol release. Acts antagonistically with PNPLA2/ATGL in regulation of cellular lipid stores. May regulate triglyceride accumulation indirectly through stimulation of PNPLA2/ATGL ubiquitination and proteasomal degradation. Promotes microtubule-dependent lipid droplet fusion. Highly expressed in macrophage-rich areas in atherosclerotic lesions, suggesting that it could promote cholesterol ester turnover in macrophages. Stimulates cellular triglyceride accumulation and lipid droplet fusion. Its function is as follows. Associates with lipid droplets but does not stimulate cellular triglyceride accumulation, lipid droplet fusion or ATGL proteasomal degradation. This Mus musculus (Mouse) protein is Lipid droplet-associated hydrolase.